The sequence spans 313 residues: Desiccation-related protein PCC13-62 (313 aa).

Residues 1-26 form the signal peptide; the sequence is MAQQPTFASAALVSFFLALICSCSYA.

The sequence is that of Desiccation-related protein PCC13-62 from Craterostigma plantagineum (Blue gem).